A 79-amino-acid polypeptide reads, in one-letter code: MNGGAPTKIANFLHKSIVSVLALTSLGCGVFVISATADLLERRKKRREEEDRIINEFIENDKKRILEENLRQQQQQQQK.

The helical transmembrane segment at 15–37 (KSIVSVLALTSLGCGVFVISATA) threads the bilayer.

The protein resides in the membrane. This is an uncharacterized protein from Dictyostelium discoideum (Social amoeba).